Reading from the N-terminus, the 230-residue chain is Dephospho-CoA kinase (230 aa).

A disordered region spans residues 1–21 (MSKYAAAPSPYSHQPQTPEHK). A DPCK domain is found at 26 to 225 (VVGLTGGIGS…QDYLKLAQQL (200 aa)). ATP is bound at residue 34-39 (GSGKSA).

It belongs to the CoaE family.

The protein resides in the cytoplasm. It carries out the reaction 3'-dephospho-CoA + ATP = ADP + CoA + H(+). It functions in the pathway cofactor biosynthesis; coenzyme A biosynthesis; CoA from (R)-pantothenate: step 5/5. In terms of biological role, catalyzes the phosphorylation of the 3'-hydroxyl group of dephosphocoenzyme A to form coenzyme A. In Psychrobacter cryohalolentis (strain ATCC BAA-1226 / DSM 17306 / VKM B-2378 / K5), this protein is Dephospho-CoA kinase.